A 382-amino-acid polypeptide reads, in one-letter code: tRNA (guanine(26)-N(2))-dimethyltransferase (382 aa).

In terms of domain architecture, Trm1 methyltransferase spans T4–V370. The S-adenosyl-L-methionine site is built by R44, R69, D87, D113, and A114. The Zn(2+) site is built by C244, C247, C261, and C264.

Belongs to the class I-like SAM-binding methyltransferase superfamily. Trm1 family.

The enzyme catalyses guanosine(26) in tRNA + 2 S-adenosyl-L-methionine = N(2)-dimethylguanosine(26) in tRNA + 2 S-adenosyl-L-homocysteine + 2 H(+). Functionally, dimethylates a single guanine residue at position 26 of a number of tRNAs using S-adenosyl-L-methionine as donor of the methyl groups. This Metallosphaera sedula (strain ATCC 51363 / DSM 5348 / JCM 9185 / NBRC 15509 / TH2) protein is tRNA (guanine(26)-N(2))-dimethyltransferase.